A 331-amino-acid polypeptide reads, in one-letter code: Small ribosomal subunit protein uS2 (331 aa).

The protein belongs to the universal ribosomal protein uS2 family.

The sequence is that of Small ribosomal subunit protein uS2 from Bradyrhizobium diazoefficiens (strain JCM 10833 / BCRC 13528 / IAM 13628 / NBRC 14792 / USDA 110).